A 261-amino-acid chain; its full sequence is Cytochrome c oxidase subunit 3 (261 aa).

The Mitochondrial matrix portion of the chain corresponds to 1 to 15 (MTHQTHAYHMVNPSP). Residues 16 to 34 (WPLTGALSALLMTSGLAMW) form a helical membrane-spanning segment. Over 35-40 (FHYNSM) the chain is Mitochondrial intermembrane. The helical transmembrane segment at 41 to 66 (LLLTLGLMTNLLTMYQWWRDIVREST) threads the bilayer. Residues 67-72 (FQGHHT) are Mitochondrial matrix-facing. Residues 73 to 105 (LVVQKGLRYGMILFIISEVFFFSGFFWAFYHSS) traverse the membrane as a helical segment. At 106–128 (LAPTPELGGCWPPTGIHPLNPME) the chain is on the mitochondrial intermembrane side. The helical transmembrane segment at 129–152 (VPLLNTSVLLASGVSITWAHHSLM) threads the bilayer. Residues 153 to 155 (EGN) are Mitochondrial matrix-facing. Residues 156–183 (RKHMLQALFITISLGVYFTLLQASEYYE) traverse the membrane as a helical segment. At 184–190 (APFTISD) the chain is on the mitochondrial intermembrane side. Residues 191–223 (GIYGSTFFVATGFHGLHVIIGSTFLIVCFLRQL) traverse the membrane as a helical segment. The Mitochondrial matrix portion of the chain corresponds to 224–232 (KFHFTSNHH). Residues 233 to 256 (FGFEAAAWYWHFVDVVWLFLYVSI) traverse the membrane as a helical segment. Residues 257–261 (YWWGS) are Mitochondrial intermembrane-facing.

The protein belongs to the cytochrome c oxidase subunit 3 family. In terms of assembly, component of the cytochrome c oxidase (complex IV, CIV), a multisubunit enzyme composed of 14 subunits. The complex is composed of a catalytic core of 3 subunits MT-CO1, MT-CO2 and MT-CO3, encoded in the mitochondrial DNA, and 11 supernumerary subunits COX4I, COX5A, COX5B, COX6A, COX6B, COX6C, COX7A, COX7B, COX7C, COX8 and NDUFA4, which are encoded in the nuclear genome. The complex exists as a monomer or a dimer and forms supercomplexes (SCs) in the inner mitochondrial membrane with NADH-ubiquinone oxidoreductase (complex I, CI) and ubiquinol-cytochrome c oxidoreductase (cytochrome b-c1 complex, complex III, CIII), resulting in different assemblies (supercomplex SCI(1)III(2)IV(1) and megacomplex MCI(2)III(2)IV(2)).

The protein resides in the mitochondrion inner membrane. It carries out the reaction 4 Fe(II)-[cytochrome c] + O2 + 8 H(+)(in) = 4 Fe(III)-[cytochrome c] + 2 H2O + 4 H(+)(out). Its function is as follows. Component of the cytochrome c oxidase, the last enzyme in the mitochondrial electron transport chain which drives oxidative phosphorylation. The respiratory chain contains 3 multisubunit complexes succinate dehydrogenase (complex II, CII), ubiquinol-cytochrome c oxidoreductase (cytochrome b-c1 complex, complex III, CIII) and cytochrome c oxidase (complex IV, CIV), that cooperate to transfer electrons derived from NADH and succinate to molecular oxygen, creating an electrochemical gradient over the inner membrane that drives transmembrane transport and the ATP synthase. Cytochrome c oxidase is the component of the respiratory chain that catalyzes the reduction of oxygen to water. Electrons originating from reduced cytochrome c in the intermembrane space (IMS) are transferred via the dinuclear copper A center (CU(A)) of subunit 2 and heme A of subunit 1 to the active site in subunit 1, a binuclear center (BNC) formed by heme A3 and copper B (CU(B)). The BNC reduces molecular oxygen to 2 water molecules using 4 electrons from cytochrome c in the IMS and 4 protons from the mitochondrial matrix. The chain is Cytochrome c oxidase subunit 3 (MT-CO3) from Ceratotherium simum (White rhinoceros).